Consider the following 271-residue polypeptide: Formamidopyrimidine-DNA glycosylase (271 aa).

Proline 2 functions as the Schiff-base intermediate with DNA in the catalytic mechanism. Residue glutamate 3 is the Proton donor of the active site. The Proton donor; for beta-elimination activity role is filled by lysine 58. DNA is bound by residues histidine 91, arginine 110, and arginine 152. The FPG-type zinc-finger motif lies at tryptophan 237–lysine 271. Residue arginine 261 is the Proton donor; for delta-elimination activity of the active site.

This sequence belongs to the FPG family. Monomer. Requires Zn(2+) as cofactor.

It carries out the reaction Hydrolysis of DNA containing ring-opened 7-methylguanine residues, releasing 2,6-diamino-4-hydroxy-5-(N-methyl)formamidopyrimidine.. The catalysed reaction is 2'-deoxyribonucleotide-(2'-deoxyribose 5'-phosphate)-2'-deoxyribonucleotide-DNA = a 3'-end 2'-deoxyribonucleotide-(2,3-dehydro-2,3-deoxyribose 5'-phosphate)-DNA + a 5'-end 5'-phospho-2'-deoxyribonucleoside-DNA + H(+). Involved in base excision repair of DNA damaged by oxidation or by mutagenic agents. Acts as a DNA glycosylase that recognizes and removes damaged bases. Has a preference for oxidized purines, such as 7,8-dihydro-8-oxoguanine (8-oxoG). Has AP (apurinic/apyrimidinic) lyase activity and introduces nicks in the DNA strand. Cleaves the DNA backbone by beta-delta elimination to generate a single-strand break at the site of the removed base with both 3'- and 5'-phosphates. This chain is Formamidopyrimidine-DNA glycosylase, found in Nitrosomonas eutropha (strain DSM 101675 / C91 / Nm57).